The sequence spans 287 residues: Large ribosomal subunit protein uL2 (287 aa).

Residues 221-287 (RGSVMNPCDH…SKRSRGGRDS (67 aa)) are disordered. Over residues 271–287 (LRKRRKTSKRSRGGRDS) the composition is skewed to basic residues.

Belongs to the universal ribosomal protein uL2 family. As to quaternary structure, part of the 50S ribosomal subunit. Forms a bridge to the 30S subunit in the 70S ribosome.

In terms of biological role, one of the primary rRNA binding proteins. Required for association of the 30S and 50S subunits to form the 70S ribosome, for tRNA binding and peptide bond formation. It has been suggested to have peptidyltransferase activity; this is somewhat controversial. Makes several contacts with the 16S rRNA in the 70S ribosome. This is Large ribosomal subunit protein uL2 from Synechococcus sp. (strain CC9902).